A 179-amino-acid polypeptide reads, in one-letter code: Adenine phosphoribosyltransferase (179 aa).

Belongs to the purine/pyrimidine phosphoribosyltransferase family. Homodimer.

The protein resides in the cytoplasm. The enzyme catalyses AMP + diphosphate = 5-phospho-alpha-D-ribose 1-diphosphate + adenine. The protein operates within purine metabolism; AMP biosynthesis via salvage pathway; AMP from adenine: step 1/1. In terms of biological role, catalyzes a salvage reaction resulting in the formation of AMP, that is energically less costly than de novo synthesis. This is Adenine phosphoribosyltransferase from Nitrobacter winogradskyi (strain ATCC 25391 / DSM 10237 / CIP 104748 / NCIMB 11846 / Nb-255).